The following is an 87-amino-acid chain: DNA-directed RNA polymerase subunit omega (87 aa).

Belongs to the RNA polymerase subunit omega family. The RNAP catalytic core consists of 2 alpha, 1 beta, 1 beta' and 1 omega subunit. When a sigma factor is associated with the core the holoenzyme is formed, which can initiate transcription.

It carries out the reaction RNA(n) + a ribonucleoside 5'-triphosphate = RNA(n+1) + diphosphate. Its function is as follows. Promotes RNA polymerase assembly. Latches the N- and C-terminal regions of the beta' subunit thereby facilitating its interaction with the beta and alpha subunits. This Leifsonia xyli subsp. xyli (strain CTCB07) protein is DNA-directed RNA polymerase subunit omega.